Here is a 460-residue protein sequence, read N- to C-terminus: MYIPCLMCTQHPDSTVKITAGEEVDEAVVAFLAYGCDEVMVDYEGKATPYSQPRDVASKALALGLPLGERFFITPRVPNPRLEDFERSMLSLEAAVLANSYSQRAAGVQAVKWVVLPMTEDVETMAFVYKALDMKARDLAELNAVKRDSSIELIPLVEDAMRQIKIESFIKALFRTAAQSGRILEHMRIFLGISDSAVRHGHMASALAMVKALGQISEINRDGEFKISPIVGMGSPPFRGGLNNPHLAVPEAAQYAGYKTATIQSAVRYDVSYAEYQKVREAILSVYTPRRLHVEEAWITKASELYREAIRPYIGKIAELANAIPSTRDRVSWREYGRVIEGVEWRVPRAIVYTATWYFAGVPPTLLDARFIAWAYKNDLLDDVLRALPATVEEWKFESRFYSRERAEKTLGGEIVKDIDNAFDILGIKPEPDRTYITLLNSADTQPHAIALGRIRGFLG.

The protein belongs to the PEPCase type 2 family. In terms of assembly, homotetramer. Mg(2+) is required as a cofactor.

The catalysed reaction is oxaloacetate + phosphate = phosphoenolpyruvate + hydrogencarbonate. In terms of biological role, catalyzes the irreversible beta-carboxylation of phosphoenolpyruvate (PEP) to form oxaloacetate (OAA), a four-carbon dicarboxylic acid source for the tricarboxylic acid cycle. The chain is Phosphoenolpyruvate carboxylase from Pyrobaculum aerophilum (strain ATCC 51768 / DSM 7523 / JCM 9630 / CIP 104966 / NBRC 100827 / IM2).